The sequence spans 260 residues: MLGFAPAPGRPLFVLFGSSIVQFSFSNGGWGAALADIYARKADILLRGYIGWNSRRALQVIDKIFPKDSPVQPSLVIVYFGGNDSVAAHSSGLGPHVPLEEYIDNMRKIADHLKSLSEKTRVIFLSCPPLNEETLRKSTSTVLSEIVRTNETCRLYSEACVSLCKEMDLKVVDLWNAMQKRDDWATACFTDGLHLSEEGSKIVVEEILRILKEAEWDPCLHWKAMPTEFGEDSPYDLVSSSGQSTVNPSDWTFHRTIQWD.

Residues 1–35 (MLGFAPAPGRPLFVLFGSSIVQFSFSNGGWGAALA) form the signal peptide. Catalysis depends on Ser18, which acts as the Nucleophile. 2 N-linked (GlcNAc...) asparagine glycosylation sites follow: Asn83 and Asn150. Residues Asp191 and His194 contribute to the active site.

The protein belongs to the 'GDSL' lipolytic enzyme family. Highly expressed in panicles. Expressed in shoots, mature flowers and seeds.

The protein resides in the endoplasmic reticulum. Its function is as follows. Involved in the organization of leaf cuticle and wax crystals. The polypeptide is GDSL esterase/lipase WDL1 (Oryza sativa subsp. japonica (Rice)).